Consider the following 220-residue polypeptide: MALNGFLEFFQKGKTFRPKKPFASGTIRYSLHKQAQASLQSGINLRQVVRLPQGENLNDWLAVHVVDFFNRINLIYGTVSEFCNETTCPTMSGGSRYEYLWADGDLYKKPTALSAQKYIEHLMDWIETQINNEAVFPVSTDVPFPKNFIAISRKILTRLFRVFVHVYIHHFDRIVSIGAEAHVNACYKHFYYFVQEFDMISAKELEPLQEMTSRICKDKD.

Residues C83, C88, H165, and H170 each coordinate Zn(2+).

The protein belongs to the MOB1/phocein family.

In Drosophila melanogaster (Fruit fly), this protein is MOB kinase activator-like 3 (Mob3).